The following is a 1253-amino-acid chain: Latent-transforming growth factor beta-binding protein 3 (1253 aa).

Residues 1 to 38 (MPGPRGAAHGLAPAMRQAGALGLLALLLLALLGPGGGA) form the signal peptide. Residue N86 is glycosylated (N-linked (GlcNAc...) asparagine). An EGF-like 1 domain is found at 106 to 138 (RVVVCPLPCMNGGQCSSRNQCLCPPDFTGRFCQ). Cystine bridges form between C110/C120, C114/C126, and C128/C137. The disordered stretch occupies residues 244-270 (GPNAEGPASSQHLLPHPKPQHPRPPTQ). A TB 1 domain is found at 274–328 (GRCFQDTLPKQPCGSNPLPGLTKQEDCCGSIGTAWGQSKCHKCPQLQYTGVQKPG). 3 cysteine pairs are disulfide-bonded: C276–C300, C286–C313, and C301–C316. Residue N346 is glycosylated (N-linked (GlcNAc...) asparagine). Residues 352–392 (DINECAMPGMCRHGDCLNNPGSYRCVCPPGHSLGPSRTQCI) form the EGF-like 2; calcium-binding domain. 7 disulfides stabilise this stretch: C356–C367, C362–C376, C378–C391, C402–C425, C412–C437, C426–C440, and C427–C452. In terms of domain architecture, TB 2 spans 400–452 (SLCFRLVSTEHQCQHPLTTRLTRQLCCCSVGKAWGARCQRCPADGTAAFKEIC). Residues 475–555 (FSLFLHPDGP…PTFHRFLPDL (81 aa)) are disordered. In terms of domain architecture, EGF-like 3 spans 571 to 612 (ETDECRLNQNICGHGQCVPGPSDYSCHCNAGYRSHPQHRYCV). 32 disulfide bridges follow: C575-C587, C582-C596, C598-C611, C617-C629, C622-C638, C661-C673, C667-C682, C684-C698, C745-C756, C751-C765, C767-C780, C786-C797, C792-C806, C808-C821, C827-C838, C833-C847, C849-C861, C867-C880, C874-C889, C891-C904, C916-C939, C926-C951, C940-C956, C941-C968, C994-C1007, C1002-C1016, C1018-C1031, C1037-C1048, C1043-C1057, C1059-C1072, C1113-C1127, and C1114-C1136. The region spanning 613 to 656 (DVNECEAEPCGPGKGICMNTGGSYNCHCNRGYRLHVGAGGRSCV) is the EGF-like 4; calcium-binding domain. The EGF-like 5; calcium-binding domain occupies 657 to 699 (DLNECTKPHLCGDGGFCINFPGHYKCNCYPGYRLKASRPPICE). In terms of domain architecture, EGF-like 6; calcium-binding spans 741 to 781 (DVNECSEGTPCSPGWCENLPGSYRCTCAQGYEPAQDGLSCI). Residues 782–822 (DVDECEAGKVCQDGICTNTPGSFQCQCLSGYHLSRDRSRCE) form the EGF-like 7; calcium-binding domain. The 39-residue stretch at 823–861 (DIDECDFPAACIGGDCINTNGSYRCLCPQGHRLVGGRKC) folds into the EGF-like 8; calcium-binding domain. A glycan (N-linked (GlcNAc...) asparagine) is linked at N842. Residues 863-905 (DIDECSQDPGLCLPHGACENLQGSYVCVCDEGFTLTQDQHGCE) enclose the EGF-like 9; calcium-binding domain. Residues 914–968 (KECYLNFDDTVFCDSVLATNVTQQECCCSLGAGWGDHCEIYPCPVYSSAEFHSLC) form the TB 3 domain. N-linked (GlcNAc...) asparagine glycosylation is present at N933. One can recognise an EGF-like 10; calcium-binding domain in the interval 990–1032 (DIDECILFGAEICKEGKCVNTQPGYECYCKQGFYYDGNLLECV). Residues 1033–1072 (DVDECLDESNCRNGVCENTRGGYRCACTPPAEYSPAQRQC) form the EGF-like 11; calcium-binding domain. The region spanning 1086-1136 (EVCWGQRGEDGMCMGPLAGPALTFDDCCCRQGRGWGTQCRPCPPRGTGSQC) is the TB 4 domain. Over residues 1138–1148 (TSQSESNSFWD) the composition is skewed to polar residues. The interval 1138–1169 (TSQSESNSFWDTSPLLLGKSPRDEDSSEEDSD) is disordered. One can recognise an EGF-like 12; calcium-binding domain in the interval 1204-1231 (DIDECRELNQRGLLCKSERCVNTSGSFR). 2 cysteine pairs are disulfide-bonded: C1208-C1223 and C1218-C1232. Residue N1225 is glycosylated (N-linked (GlcNAc...) asparagine).

This sequence belongs to the LTBP family. In terms of assembly, forms part of the large latent transforming growth factor beta (TGFB1) precursor complex; removal is essential for activation of complex. Interacts with EFEMP2. Post-translationally, contains hydroxylated asparagine residues. In terms of processing, two intrachain disulfide bonds from the TB3 domain are rearranged upon TGFB1 binding, and form interchain bonds with TGFB1 propeptide, anchoring it to the extracellular matrix.

It localises to the secreted. The protein localises to the extracellular space. Its subcellular location is the extracellular matrix. In terms of biological role, key regulator of transforming growth factor beta (TGFB1, TGFB2 and TGFB3) that controls TGF-beta activation by maintaining it in a latent state during storage in extracellular space. Associates specifically via disulfide bonds with the Latency-associated peptide (LAP), which is the regulatory chain of TGF-beta, and regulates integrin-dependent activation of TGF-beta. This is Latent-transforming growth factor beta-binding protein 3 (Ltbp3) from Mus musculus (Mouse).